The primary structure comprises 393 residues: tRNA(Met) cytidine acetate ligase (393 aa).

Positions 81, 142, and 167 each coordinate ATP.

This sequence belongs to the TmcAL family.

It is found in the cytoplasm. The catalysed reaction is cytidine(34) in elongator tRNA(Met) + acetate + ATP = N(4)-acetylcytidine(34) in elongator tRNA(Met) + AMP + diphosphate. Functionally, catalyzes the formation of N(4)-acetylcytidine (ac(4)C) at the wobble position of elongator tRNA(Met), using acetate and ATP as substrates. First activates an acetate ion to form acetyladenylate (Ac-AMP) and then transfers the acetyl group to tRNA to form ac(4)C34. The protein is tRNA(Met) cytidine acetate ligase of Bacillus cereus (strain Q1).